The primary structure comprises 259 residues: DNA-directed RNA polymerase 30 kDa polypeptide (259 aa).

A TFIIS-type zinc finger spans residues 155-195; sequence YNTPCPNCKSRNTTPMMIQTRAADEPPLVRHACRDCKQHFK. Residues Cys159, Cys162, Cys187, and Cys190 each contribute to the Zn(2+) site. The segment at 220–259 is disordered; that stretch reads EILPDNNPSPPESPEPASPIDDGLIRATFDRNDEPPEDDE. Pro residues predominate over residues 226 to 236; sequence NPSPPESPEPA.

The protein belongs to the poxviridae DNA-directed RNA polymerase 30 kDa subunit family. As to quaternary structure, the DNA-dependent RNA polymerase (vRNAP) consists of eight subunits encoded by early viral genes and termed according to their apparent molecular masses Rpo147, Rpo132, Rpo35, Rpo30, Rpo22, Rpo19, Rpo18, and Rpo7. The same holoenzyme, with the addition of the transcription-specificity factor RAP94, is used for early gene expression.

The protein resides in the virion. The protein localises to the host cytoplasm. It catalyses the reaction RNA(n) + a ribonucleoside 5'-triphosphate = RNA(n+1) + diphosphate. In terms of biological role, part of the DNA-dependent RNA polymerase which catalyzes the transcription of viral DNA into RNA using the four ribonucleoside triphosphates as substrates. Responsible for the transcription of early, intermediate and late genes. DNA-dependent RNA polymerase associates with the early transcription factor (ETF), itself composed of OPG118 and OPG134, thereby allowing the early genes transcription. Late transcription, and probably also intermediate transcription, require newly synthesized RNA polymerase. This is DNA-directed RNA polymerase 30 kDa polypeptide (OPG066) from Monkeypox virus.